A 462-amino-acid polypeptide reads, in one-letter code: Cysteine desulfurase, mitochondrial (462 aa).

Pyridoxal 5'-phosphate is bound by residues 132-133 (AT), Asn212, Gln240, and 260-262 (SGH). Lys263 is modified (N6-(pyridoxal phosphate)lysine). Thr300 contributes to the pyridoxal 5'-phosphate binding site. Residue Cys386 is the Cysteine persulfide intermediate of the active site. Cys386 is a binding site for [2Fe-2S] cluster.

Belongs to the class-V pyridoxal-phosphate-dependent aminotransferase family. NifS/IscS subfamily. Component of the mitochondrial core iron-sulfur cluster (ISC) assembly complex at least composed of the cystein desulfurase Nfs1, the scaffold protein IscU, the accessory protein bcn92/Isd11/Lyrm4, and probably fh/frataxin. Interacts with bcn92/Isd11/Lyrm4 and IscU. Pyridoxal 5'-phosphate serves as cofactor. Ubiquitous expression at high levels in any life stage.

The protein localises to the mitochondrion. It localises to the nucleus. The enzyme catalyses (sulfur carrier)-H + L-cysteine = (sulfur carrier)-SH + L-alanine. Its activity is regulated as follows. Active when in complex with bcn92/Isd11/Lyrm4. L-cysteine binding kinetics are reduced in the presence of bcn92/Isd11/Lyrm4 and IscU. Activity is regulated by other components of the mitochondrial core iron-sulfur cluster (ISC) complex; Activity is reduced in the presence of IscU but enhanced when both IscU and fh/frataxin are present. In terms of biological role, catalyzes the removal of elemental sulfur from cysteine to produce alanine. It supplies the inorganic sulfur for iron-sulfur (Fe-S) clusters. The chain is Cysteine desulfurase, mitochondrial from Drosophila melanogaster (Fruit fly).